The sequence spans 79 residues: UPF0154 protein SSP1415 (79 aa).

A helical membrane pass occupies residues Trp4 to Leu24.

It belongs to the UPF0154 family.

The protein localises to the membrane. The polypeptide is UPF0154 protein SSP1415 (Staphylococcus saprophyticus subsp. saprophyticus (strain ATCC 15305 / DSM 20229 / NCIMB 8711 / NCTC 7292 / S-41)).